A 99-amino-acid polypeptide reads, in one-letter code: Large ribosomal subunit protein uL23 (99 aa).

The protein belongs to the universal ribosomal protein uL23 family. As to quaternary structure, part of the 50S ribosomal subunit. Contacts protein L29, and trigger factor when it is bound to the ribosome.

One of the early assembly proteins it binds 23S rRNA. One of the proteins that surrounds the polypeptide exit tunnel on the outside of the ribosome. Forms the main docking site for trigger factor binding to the ribosome. In Lachnospira eligens (strain ATCC 27750 / DSM 3376 / VPI C15-48 / C15-B4) (Eubacterium eligens), this protein is Large ribosomal subunit protein uL23.